Reading from the N-terminus, the 180-residue chain is ATP synthase subunit delta, chloroplastic (180 aa).

The protein belongs to the ATPase delta chain family. F-type ATPases have 2 components, F(1) - the catalytic core - and F(0) - the membrane proton channel. F(1) has five subunits: alpha(3), beta(3), gamma(1), delta(1), epsilon(1). CF(0) has four main subunits: a(1), b(1), b'(1) and c(10-14). The alpha and beta chains form an alternating ring which encloses part of the gamma chain. F(1) is attached to F(0) by a central stalk formed by the gamma and epsilon chains, while a peripheral stalk is formed by the delta, b and b' chains.

It is found in the plastid. The protein localises to the chloroplast thylakoid membrane. F(1)F(0) ATP synthase produces ATP from ADP in the presence of a proton or sodium gradient. F-type ATPases consist of two structural domains, F(1) containing the extramembraneous catalytic core and F(0) containing the membrane proton channel, linked together by a central stalk and a peripheral stalk. During catalysis, ATP synthesis in the catalytic domain of F(1) is coupled via a rotary mechanism of the central stalk subunits to proton translocation. In terms of biological role, this protein is part of the stalk that links CF(0) to CF(1). It either transmits conformational changes from CF(0) to CF(1) or is implicated in proton conduction. This is ATP synthase subunit delta, chloroplastic from Rhodomonas salina (Cryptomonas salina).